Consider the following 468-residue polypeptide: Nuclear pore complex protein Nup50 (468 aa).

Over residues 1–16 (MAKRNAEKELTDRNWD) the composition is skewed to basic and acidic residues. The segment at 1-26 (MAKRNAEKELTDRNWDQEDEAEEVGT) is disordered. N-acetylalanine is present on Ala2. N6-acetyllysine is present on Lys8. Phosphoserine is present on Ser52. Residues 76–77 (FG) form repeat 1. A 5 X 2 AA repeats of F-G region spans residues 76-304 (FGSGAGGKPL…FSPGNSSLFG (229 aa)). At Lys83 the chain carries N6-acetyllysine. Residues 113–114 (FG) form repeat 2. Disordered stretches follow at residues 122–148 (TTLVDKVSNPKTNGDSQQPSSSGLASS) and 201–224 (HGNSGRNSESESNKVAAETQSPSL). Residue Lys127 is modified to N6-acetyllysine. The span at 137–148 (SQQPSSSGLASS) shows a compositional bias: low complexity. The binding to CDKN1B stretch occupies residues 144 to 206 (GLASSKACVG…IEQQHGNSGR (63 aa)). Phosphoserine occurs at positions 208 and 221. Repeat 3 spans residues 225–226 (FG). Ser234 is modified (phosphoserine). Positions 238-269 (FHGNKTEDTPDKKMEVASEKKTDPSSLGATSA) are disordered. The span at 241-260 (NKTEDTPDKKMEVASEKKTD) shows a compositional bias: basic and acidic residues. Residues Thr246 and Thr259 each carry the phosphothreonine modification. At Ser270 the chain carries Phosphoserine. The stretch at 273–274 (FG) is repeat 4. Ser296 is modified (phosphoserine). Copy 5 of the repeat occupies 303-304 (FG). Over residues 304-317 (GKDTTQSKPVSSPF) the composition is skewed to polar residues. Positions 304–345 (GKDTTQSKPVSSPFPTKPLEGQAEGDSGECKGGDEEENDEPP) are disordered. Positions 335–468 (GGDEEENDEP…HKILLEKKDA (134 aa)) constitute a RanBD1 domain. Lys353 is covalently cross-linked (Glycyl lysine isopeptide (Lys-Gly) (interchain with G-Cter in SUMO2)). N6-acetyllysine is present on Lys450.

In terms of assembly, interacts with Importin alpha-2, Importin beta, Importin beta-2, NUP153, Ran binding protein 7, CDKN1B and itself. Does not interact with TPR. Ubiquitous. Highest levels in testis, peripheral blood leukocytes and fetal liver.

The protein localises to the nucleus. It is found in the nuclear pore complex. The protein resides in the nucleus membrane. In terms of biological role, component of the nuclear pore complex that has a direct role in nuclear protein import. Actively displaces NLSs from importin-alpha, and facilitates disassembly of the importin-alpha:beta-cargo complex and importin recycling. Interacts with regulatory proteins of cell cycle progression including CDKN1B. This interaction is required for correct intracellular transport and degradation of CDKN1B. The chain is Nuclear pore complex protein Nup50 (NUP50) from Homo sapiens (Human).